Reading from the N-terminus, the 150-residue chain is Small ribosomal subunit protein bS6 (150 aa).

Positions 99–150 are disordered; that stretch reads GPSAMLQKRDRDDRGERGERGFGGGGFGGGRDREDRPRRGRDREEAATEETF. 2 stretches are compositionally biased toward basic and acidic residues: residues 105 to 118 and 128 to 144; these read QKRD…RGER and GRDR…REEA.

This sequence belongs to the bacterial ribosomal protein bS6 family.

Its function is as follows. Binds together with bS18 to 16S ribosomal RNA. In Azorhizobium caulinodans (strain ATCC 43989 / DSM 5975 / JCM 20966 / LMG 6465 / NBRC 14845 / NCIMB 13405 / ORS 571), this protein is Small ribosomal subunit protein bS6.